The sequence spans 189 residues: Movement protein (189 aa).

This sequence belongs to the tombusvirus/aureusvirus movement protein p22 family. Interacts with host protein HFI22. In terms of processing, phosphorylated.

Its subcellular location is the host membrane. In terms of biological role, transports viral genome to neighboring plant cells directly through plasmosdesmata, without any budding. The movement protein allows efficient cell to cell propagation, by bypassing the host cell wall barrier. This chain is Movement protein, found in Tomato bushy stunt virus (strain BS-3) (TBSV).